We begin with the raw amino-acid sequence, 693 residues long: Elongation factor G (693 aa).

The tr-type G domain occupies 8–284 (HMVRNIGIAA…AVIDYLPAPD (277 aa)). GTP is bound by residues 17–24 (AHIDAGKT), 81–85 (DTPGH), and 135–138 (NKMD).

Belongs to the TRAFAC class translation factor GTPase superfamily. Classic translation factor GTPase family. EF-G/EF-2 subfamily.

Its subcellular location is the cytoplasm. Its function is as follows. Catalyzes the GTP-dependent ribosomal translocation step during translation elongation. During this step, the ribosome changes from the pre-translocational (PRE) to the post-translocational (POST) state as the newly formed A-site-bound peptidyl-tRNA and P-site-bound deacylated tRNA move to the P and E sites, respectively. Catalyzes the coordinated movement of the two tRNA molecules, the mRNA and conformational changes in the ribosome. The sequence is that of Elongation factor G from Nautilia profundicola (strain ATCC BAA-1463 / DSM 18972 / AmH).